The chain runs to 66 residues: Large ribosomal subunit protein bL31 (66 aa).

The Zn(2+) site is built by cysteine 16, cysteine 18, cysteine 36, and cysteine 39.

The protein belongs to the bacterial ribosomal protein bL31 family. Type A subfamily. In terms of assembly, part of the 50S ribosomal subunit. Requires Zn(2+) as cofactor.

Functionally, binds the 23S rRNA. The protein is Large ribosomal subunit protein bL31 of Geobacillus sp. (strain WCH70).